A 254-amino-acid chain; its full sequence is Imidazole glycerol phosphate synthase subunit HisF (254 aa).

Residues Asp-12 and Asp-131 contribute to the active site.

The protein belongs to the HisA/HisF family. Heterodimer of HisH and HisF.

It is found in the cytoplasm. The enzyme catalyses 5-[(5-phospho-1-deoxy-D-ribulos-1-ylimino)methylamino]-1-(5-phospho-beta-D-ribosyl)imidazole-4-carboxamide + L-glutamine = D-erythro-1-(imidazol-4-yl)glycerol 3-phosphate + 5-amino-1-(5-phospho-beta-D-ribosyl)imidazole-4-carboxamide + L-glutamate + H(+). The protein operates within amino-acid biosynthesis; L-histidine biosynthesis; L-histidine from 5-phospho-alpha-D-ribose 1-diphosphate: step 5/9. Functionally, IGPS catalyzes the conversion of PRFAR and glutamine to IGP, AICAR and glutamate. The HisF subunit catalyzes the cyclization activity that produces IGP and AICAR from PRFAR using the ammonia provided by the HisH subunit. This is Imidazole glycerol phosphate synthase subunit HisF from Desulfitobacterium hafniense (strain Y51).